A 212-amino-acid chain; its full sequence is MKPPSSIQTSEFDSSDEEPIEDEQTPIQISWLPLSRVNYSQFLGLCALPGCKFKDVRRNIQKDTEELKSCGIQDVFVFCTRGELSKYRVPNLLDLYHQYGIITHHHPIPDGGAPDIASCCEIMEELEICLQNNRKTLIHCYGGLGRSCLVAACLLLYLSDTVSPQQAIDSLRDLRGSGAIQTIKQYNYLHEFRDKLAAHLSSRESLSRSVSR.

Over residues 1-12 (MKPPSSIQTSEF) the composition is skewed to polar residues. Residues 1 to 23 (MKPPSSIQTSEFDSSDEEPIEDE) form a disordered region. The segment at 1–34 (MKPPSSIQTSEFDSSDEEPIEDEQTPIQISWLPL) is interaction with CDK2. Acidic residues predominate over residues 13–23 (DSSDEEPIEDE). One can recognise a Tyrosine-protein phosphatase domain in the interval 32–201 (LPLSRVNYSQ…FRDKLAAHLS (170 aa)). C140 serves as the catalytic Phosphocysteine intermediate.

This sequence belongs to the protein-tyrosine phosphatase family. Interacts with cyclin-dependent kinases such as CDK1, CDK2 and CDK3. Does not interact with CDK4. Interacts (via C-terminus) with phosphorylated CDK2 (via C-terminal helix). Interacts with MS4A3 (via C-terminus); the interaction enhances CDKN3 enzymatic activity.

The protein localises to the cytoplasm. It localises to the perinuclear region. It catalyses the reaction O-phospho-L-tyrosyl-[protein] + H2O = L-tyrosyl-[protein] + phosphate. The catalysed reaction is O-phospho-L-seryl-[protein] + H2O = L-seryl-[protein] + phosphate. The enzyme catalyses O-phospho-L-threonyl-[protein] + H2O = L-threonyl-[protein] + phosphate. Its function is as follows. May play a role in cell cycle regulation. Dual specificity phosphatase active toward substrates containing either phosphotyrosine or phosphoserine residues. Dephosphorylates CDK2 at 'Thr-160' in a cyclin-dependent manner. The chain is Cyclin-dependent kinase inhibitor 3 from Sus scrofa (Pig).